The chain runs to 159 residues: uncharacterized protein (159 aa).

The next 2 membrane-spanning stretches (helical) occupy residues 59-79 and 91-113; these read IGALAAMLAVLSFALGCALVY and VFSVLSGLLYGGGAVLWGLRRVC.

The protein localises to the cell membrane. This is an uncharacterized protein from Treponema pallidum (strain Nichols).